The following is a 462-amino-acid chain: Argininosuccinate lyase (462 aa).

Belongs to the lyase 1 family. Argininosuccinate lyase subfamily.

Its subcellular location is the cytoplasm. It catalyses the reaction 2-(N(omega)-L-arginino)succinate = fumarate + L-arginine. The protein operates within amino-acid biosynthesis; L-arginine biosynthesis; L-arginine from L-ornithine and carbamoyl phosphate: step 3/3. In Dechloromonas aromatica (strain RCB), this protein is Argininosuccinate lyase.